Reading from the N-terminus, the 257-residue chain is Imidazole glycerol phosphate synthase subunit HisF (257 aa).

Active-site residues include aspartate 11 and aspartate 130.

This sequence belongs to the HisA/HisF family. In terms of assembly, heterodimer of HisH and HisF.

Its subcellular location is the cytoplasm. The enzyme catalyses 5-[(5-phospho-1-deoxy-D-ribulos-1-ylimino)methylamino]-1-(5-phospho-beta-D-ribosyl)imidazole-4-carboxamide + L-glutamine = D-erythro-1-(imidazol-4-yl)glycerol 3-phosphate + 5-amino-1-(5-phospho-beta-D-ribosyl)imidazole-4-carboxamide + L-glutamate + H(+). It participates in amino-acid biosynthesis; L-histidine biosynthesis; L-histidine from 5-phospho-alpha-D-ribose 1-diphosphate: step 5/9. IGPS catalyzes the conversion of PRFAR and glutamine to IGP, AICAR and glutamate. The HisF subunit catalyzes the cyclization activity that produces IGP and AICAR from PRFAR using the ammonia provided by the HisH subunit. In Shewanella putrefaciens (strain CN-32 / ATCC BAA-453), this protein is Imidazole glycerol phosphate synthase subunit HisF.